Reading from the N-terminus, the 456-residue chain is Serine/threonine-protein kinase PBS1 (456 aa).

Positions 1-57 are disordered; that stretch reads MGCFSCFDSSDDEKLNPVDESNHGQKKQSQPTVSNNISGLPSGGEKLSSKTNGGSKR. The N-myristoyl glycine moiety is linked to residue Gly-2. 2 S-palmitoyl cysteine lipidation sites follow: Cys-3 and Cys-6. Over residues 12 to 23 the composition is skewed to basic and acidic residues; it reads DEKLNPVDESNH. The residue at position 21 (Ser-21) is a Phosphoserine. A compositionally biased stretch (polar residues) spans 27–39; the sequence is KQSQPTVSNNISG. The 278-residue stretch at 86-363 folds into the Protein kinase domain; it reads FHPDTFLGEG…ADVVTALSYL (278 aa). ATP-binding positions include 92–100 and Lys-115; that span reads LGEGGFGRV. Tyr-160 carries the phosphotyrosine modification. The Proton acceptor role is filled by Asp-213. Residues Ser-217 and Ser-247 each carry the phosphoserine modification. Phosphothreonine occurs at positions 248 and 253. A Phosphotyrosine modification is found at Tyr-261. The Recognition motif required for RPS5-mediated plant resistance to P.syringae motif lies at 292 to 296; the sequence is SEMPH. A disordered region spans residues 368–456; the sequence is YDPSKDDSRR…QGTSESNSTG (89 aa). Basic and acidic residues-rich tracts occupy residues 370–392 and 400–429; these read PSKD…RNDD and FDLE…RAVA. A compositionally biased stretch (polar residues) spans 446–456; that stretch reads EQGTSESNSTG.

It belongs to the protein kinase superfamily. Ser/Thr protein kinase family. In infected plant cells, it interacts with the P.syringae virulence protein avrPphB. In uninfected plants, autophosphorylated form interacts with RPS5. Interacts with FLS2. Cleaved by avrPphB in infected plant cells. Its cleavage serves as a signal that triggers the RPS5-mediated defense system. In terms of processing, autophosphorylates. Autophosphorylation may be required to trigger the RPS5-mediated plant defense system. Post-translationally, palmitoylation at Cys-3 and Cys-6 are required for plasma membrane location that is essential for the RPS5-mediated plant defense response.

Its subcellular location is the cell membrane. The enzyme catalyses L-seryl-[protein] + ATP = O-phospho-L-seryl-[protein] + ADP + H(+). It catalyses the reaction L-threonyl-[protein] + ATP = O-phospho-L-threonyl-[protein] + ADP + H(+). Protein kinase required for plant defense mechanism mediated by the disease resistance (R) protein RPS5. In case of infection by Pseudomonas syringae, AvrPphB triggers RPS5-mediated defense mechanism via the cleavage of PBS1. Both kinase activity and cleavage by avrPphB are independently required to trigger the RPS5-mediated resistance. Contributes to PAMP-triggered immunity (PTI) signaling and defense responses downstream of FLS2. This chain is Serine/threonine-protein kinase PBS1, found in Arabidopsis thaliana (Mouse-ear cress).